Here is a 110-residue protein sequence, read N- to C-terminus: Glycine-rich selenoprotein (110 aa).

Over 1–20 (MVYIDHNGRVWEKRPWDWRR) the chain is Lumenal. The chain crosses the membrane as a helical; Signal-anchor for type III membrane protein span at residues 21–41 (IVELFVGIWFAIKQLFLTFLA). The Cytoplasmic segment spans residues 42-110 (PFTGNNNQAN…CNMPAGGGUG (69 aa)). The segment at 51 to 110 (NPRRGNGWGGGGGWGGGGGGGGGGGGGRPGSGSGGLRPNRRIGRIQPTMSCNMPAGGGUG) is disordered. A compositionally biased stretch (gly residues) spans 56-85 (NGWGGGGGWGGGGGGGGGGGGGRPGSGSGG). Residue U109 is a non-standard amino acid, selenocysteine.

It localises to the golgi apparatus membrane. Its function is as follows. Plays a role in the life span. May be involved in regulating the redox state of the cell and possesses anticarcinogenic properties. The polypeptide is Glycine-rich selenoprotein (SelG) (Drosophila melanogaster (Fruit fly)).